Here is a 396-residue protein sequence, read N- to C-terminus: Phosphoglycerate kinase (396 aa).

Substrate contacts are provided by residues 21 to 23 (DFN), arginine 36, 59 to 62 (HLGK), arginine 119, and arginine 156. ATP-binding positions include lysine 206, glycine 294, glutamate 325, and 352-355 (GGDS).

It belongs to the phosphoglycerate kinase family. Monomer.

Its subcellular location is the cytoplasm. It catalyses the reaction (2R)-3-phosphoglycerate + ATP = (2R)-3-phospho-glyceroyl phosphate + ADP. Its pathway is carbohydrate degradation; glycolysis; pyruvate from D-glyceraldehyde 3-phosphate: step 2/5. The chain is Phosphoglycerate kinase from Listeria monocytogenes serovar 1/2a (strain ATCC BAA-679 / EGD-e).